Reading from the N-terminus, the 328-residue chain is Malate dehydrogenase (328 aa).

An NAD(+)-binding site is contributed by 12 to 18 (GAAGQIA). The substrate site is built by Arg93 and Arg99. NAD(+) is bound by residues Asn106, Gln113, and 130 to 132 (VGN). The substrate site is built by Asn132 and Arg163. The active-site Proton acceptor is the His188.

The protein belongs to the LDH/MDH superfamily. MDH type 2 family.

It catalyses the reaction (S)-malate + NAD(+) = oxaloacetate + NADH + H(+). Its function is as follows. Catalyzes the reversible oxidation of malate to oxaloacetate. This chain is Malate dehydrogenase, found in Burkholderia multivorans (strain ATCC 17616 / 249).